The sequence spans 47 residues: Delta-actitoxin-Axm1g (47 aa).

Disulfide bonds link Cys4–Cys44, Cys6–Cys34, and Cys27–Cys45.

Belongs to the sea anemone sodium channel inhibitory toxin family. Type I subfamily.

Its subcellular location is the secreted. It is found in the nematocyst. The sequence is that of Delta-actitoxin-Axm1g from Anthopleura xanthogrammica (Giant green sea anemone).